Consider the following 655-residue polypeptide: MAAIESVLTETRVFPPAEAFVTQANVAGMEAYQALCRRAEADYEGFWAELARQHIDWKTPFTRTLDESDAPFYRWFDDGELNVSYNCLDRHLATRGDKTALIFEADDGSVRTVTYKELHARVCQFANGLKSLGVGKGDRVIVYMPMSIEAVVAMQACARIGAIHSVVFGGFSAKSLFERIEDAQAKLIVTADESLRGGKAVPLKRAADEALAMGDTSCVERVVVYRRSGGEVNWSARDLWWHELTQTQAETCEPVWVSAEHPLFILYTSGSTGKPKGVQHSTGGYLLGALLSMLWVFDAKADNDVYWCTADVGWITGHTYVAYGPLALGMTEVIFEGIPTYPHAGRFWETIAKHKVTTFYTAPTAIRSLIKLGSELPAQYDLSSLRLLGTVGEPINPEAWMWYHEVIGGGRCPIVDTWWQTETGAHMIAPLPGAVPTKPGSCTLPLPGIMAAVTDEHGGPVAKGQGGYLVIKRPFPSQLRTLWGDPERFKKTYFPEEMGGKTYLAGDSAHRDDDGYFWIMGRIDDVLNVSGHRLGTMEIESALVSNPRVAEAAVVGRPHEVKGEAVVAYVVLKGARAVGDEAKDIARELRDWVGKEIGPIAKPDEIRFGENLPKTRSGKIMRRLLRAIAKGEEITQDVSTLENPAILDQLKEAVK.

CoA contacts are provided by residues 196-199 (RGGK) and threonine 316. Residues 392–394 (GEP), 416–421 (DTWWQT), aspartate 507, and arginine 522 each bind ATP. CoA is bound at residue serine 530. Arginine 533 contacts ATP. Residues valine 544 and valine 549 each coordinate Mg(2+). Position 619 is an N6-acetyllysine (lysine 619).

The protein belongs to the ATP-dependent AMP-binding enzyme family. It depends on Mg(2+) as a cofactor. Acetylated. Deacetylation by the SIR2-homolog deacetylase activates the enzyme.

The catalysed reaction is acetate + ATP + CoA = acetyl-CoA + AMP + diphosphate. Its function is as follows. Catalyzes the conversion of acetate into acetyl-CoA (AcCoA), an essential intermediate at the junction of anabolic and catabolic pathways. AcsA undergoes a two-step reaction. In the first half reaction, AcsA combines acetate with ATP to form acetyl-adenylate (AcAMP) intermediate. In the second half reaction, it can then transfer the acetyl group from AcAMP to the sulfhydryl group of CoA, forming the product AcCoA. This is Acetyl-coenzyme A synthetase from Thiobacillus denitrificans (strain ATCC 25259 / T1).